Consider the following 375-residue polypeptide: MNEEEAPSEQKKTLSLVPSPTTNLFLPDDILLSSLSRISRLYYPTFSLVSKSFRSLIASPELYQTRSILGRTESCLYVSLRLLNDSNLRWYTLCRVPDRKLTNFSGGHLLVPILSRYAPPAHWSSVVAVDYNIYAIGGPINDAPSSSVSVLDCQCEKWREAPSMRVARNYPTATVLDGKIYVAGGCEDCTSLDCIEVFDPKTQTWDSVASPGTERCERLVYKSVGIEGKYHLFGGAGHVAYDPKEGRWDSVGMDMEMGRTWVSYCVINNILFYYNDREFKWYDYKGRFWRKLMGLERLIKFLCYSRVNLAAYGEKMAVLWDTFVPSSSKNKMIWCAEITIERHDIYEICGKTEWFDVVLRVPKSYELVHVLAATV.

The F-box domain maps to 20–66 (PTTNLFLPDDILLSSLSRISRLYYPTFSLVSKSFRSLIASPELYQTR). 3 Kelch repeats span residues 132–178 (NIYA…VLDG), 179–225 (KIYV…KSVG), and 229–269 (KYHL…VINN).

The sequence is that of F-box/kelch-repeat protein At4g39580 from Arabidopsis thaliana (Mouse-ear cress).